Here is a 474-residue protein sequence, read N- to C-terminus: MSLQSPSRLLELAGQSLLRNQFLTIFILDELPREVFPLMFMEASSMRHFEALKLMVQAWPFLRLPLGSLMKTPHLETLQAVLKGLDTLLAQKLRPRRWKLQVLDLRDVDGNFWTIWSGARALSCSPEAMSKRQTVEDYPRTGEHQPLKVFIDLCQKESTLDECLSYLCRWIHYRRGLVHLCCNKVQNYSMPTSSFRNLLKRVYPDSIQELEIKRKCSLNKTGKFAPYLSQMSNLRKLFLAFGYDDELYVSGQQQFVPDLDCPFLCLYYPQMLYIRKISNIKEHLEHLLRCLKNPLGTFIFCHAYLADQDMECLSQYPSLSQLKELHLIHILMWTTNLEPLGALLEKVAATLEILTLKDCQIQDSQLRVLLPALSRCSQLTTFYFRGNETSTNALKDLLCHTGGLSKLGLELYPAPLECLDNRGHVNWEILAPIRAELMCTLREVRQPKRIFFGPIPCPSCGSWPSEKVDFHLCS.

The stretch at R97–C124 is one LRR 1; degenerate repeat. The stretch at H179–Y203 is one LRR 2; degenerate repeat. Residues P204–Q230 form an LRR 3; degenerate repeat. The stretch at M231–C265 is one LRR 4; degenerate repeat. LRR repeat units follow at residues L266–L291, K292–K323, E324–A342, A348–R375, and C376–H400.

Belongs to the PRAME family.

This Homo sapiens (Human) protein is PRAME family member 17.